The sequence spans 519 residues: Flavin-dependent halogenase rdc2 (519 aa).

Positions 1-21 (MSVPKSCTILVAGGGPAGSYA) are cleaved as a signal peptide. Residues Gly14, Ala17, and Glu47 each coordinate FAD. The chloride site is built by Ser324 and Gly325.

This sequence belongs to the flavin-dependent halogenase family.

Its pathway is secondary metabolite biosynthesis. Its function is as follows. Flavin-dependent halogenase; part of the gene cluster that mediates the biosynthesis of radicicol, a resorcylic acid lactone (RAL) that irreversibly inhibits the HSP90 molecular chaperone, an important target for cancer chemotherapy. Within the cluster, rdc2 is involved in the chlorination of the resorcylic acid lactone (RAL) structure to convert monocillin I into radicicol. Also chlorinates monocillin II to produce 6-cholomonocillin II and monocilllin IV to produce 13-chloromonocillin IV. In contrast to most fungal halogenases, rdc2 has a broad substrate specificity and can accept a variety of macrolactones as the substrates to generate chlorinated derivatives, including dihydroresorcylide, zearalenone, curvularin, or even curcumin. Rdc2 is able to dichlorinate dihydroresorcylide and monocillin IV. Dihydroresorcylide is first chlorinated at position 11 to produce 11-chlorodihydroresorcylide which can be further chlorinated by rdc2 at possition 13. Mororeover, rdc2 can incorporate bromine into dihydroresorcylide to yield the corresponding mono- and di-brominated derivatives. Finally, rdc2 is also able to halogenate the isoquinolines 4-hydroxyisoquinoline and 6-hydroxyisoquinoline into 3-chloro-4-hydroxyisoquinoline and 5-chloro-6-hydroxyisoquinoline, respectively. The radicicol cluster encodes only two apparent post-PKS enzymes, a cytochrome P450 monooxygenase (rdc4) and a non-heme halogenase (rdc2) that could introduce the epoxide and the chlorine, respectively. If this cluster includes all the genes required for radicicol biosynthesis, the remaining structural features of radicicol are presumably generated by the PKSs rdc1 and rdc5. The C-2' ketone could arise if the R-PKS rdc5 and NR-PKS rdc1 each carry out four iterations, in contrast to the five iteration-three iteration split for the hypothemycin PKSs. The origin of the cis 5',6' double bond is not known. The radicicol R-PKS rdc5 ER domain may catalyze either double bond isomerization or reduction in the third iteration. This is Flavin-dependent halogenase rdc2 from Metacordyceps chlamydosporia (Nematophagous fungus).